The following is a 183-amino-acid chain: Capsid protein (183 aa).

The interval 136-183 is disordered; it reads NAPILSTLPETTVVRRRGRSPRRRTPSPRRRRSQSPRRRRTQSRESQC. Positions 149–176 are enriched in basic residues; it reads VRRRGRSPRRRTPSPRRRRSQSPRRRRT. Phosphoserine; by host is present on residues S155, S162, and S170. One copy of the 1; half-length repeat lies at 155 to 161; the sequence is SPRRRTP. Residues 155–177 are 3 X 8 AA repeats of S-P-R-R-R-[PR]-[ST]-Q; it reads SPRRRTPSPRRRRSQSPRRRRTQ. The Bipartite nuclear localization signal signature appears at 158–175; that stretch reads RRTPSPRRRRSQSPRRRR. A run of 2 repeats spans residues 162-169 and 170-177. Residues 177-183 form an RNA binding region; it reads QSRESQC.

Belongs to the orthohepadnavirus core antigen family. Homodimerizes, then multimerizes. Interacts with cytosol exposed regions of viral L glycoprotein present in the reticulum-to-Golgi compartment. Interacts with human FLNB. Phosphorylated form interacts with host importin alpha; this interaction depends on the exposure of the NLS, which itself depends upon genome maturation and/or phosphorylation of the capsid protein. Interacts with host NUP153. Post-translationally, phosphorylated by host SRPK1, SRPK2, and maybe protein kinase C or GAPDH. Phosphorylation is critical for pregenomic RNA packaging. Protein kinase C phosphorylation is stimulated by HBx protein and may play a role in transport of the viral genome to the nucleus at the late step during the viral replication cycle.

Its subcellular location is the virion. It localises to the host cytoplasm. Functionally, self assembles to form an icosahedral capsid. Most capsids appear to be large particles with an icosahedral symmetry of T=4 and consist of 240 copies of capsid protein, though a fraction forms smaller T=3 particles consisting of 180 capsid proteins. Entering capsids are transported along microtubules to the nucleus. Phosphorylation of the capsid is thought to induce exposure of nuclear localization signal in the C-terminal portion of the capsid protein that allows binding to the nuclear pore complex via the importin (karyopherin-) alpha and beta. Capsids are imported in intact form through the nuclear pore into the nuclear basket, where it probably binds NUP153. Only capsids that contain the mature viral genome can release the viral DNA and capsid protein into the nucleoplasm. Immature capsids get stuck in the basket. Capsids encapsulate the pre-genomic RNA and the P protein. Pre-genomic RNA is reverse-transcribed into DNA while the capsid is still in the cytoplasm. The capsid can then either be directed to the nucleus, providing more genomes for transcription, or bud through the endoplasmic reticulum to provide new virions. The chain is Capsid protein from Hepatitis B virus genotype D (isolate France/alpha1/1989) (HBV-D).